The primary structure comprises 271 residues: MIMGQYLFWLANAHEPIENRIPELPNFISVLYHRFQHTTWAQFLHRWENIIFAILVASLISLVAYLGARKKEIIPSKFQNLLEIAVEKFSHLILEVLGPEGKAYIPFLGTLFIYIFTMNIFGMVPLMKAPSSSLNITAALAICVFCLVQFLNIRNMGIFGFLYHLAGSPKSMLEWLLAPLMFSLEIISQLSRPLTLALRLFGNVLGEDILIGTFALMGVVMISSVETFVGIPLQLPFMFLGLLTSFMQALVFTLLSTVYILLSMHKEGEKN.

5 helical membrane-spanning segments follow: residues Trp-47–Gly-67, Phe-107–Met-127, Ser-133–Ile-153, Ile-209–Val-229, and Leu-235–Leu-255.

The protein belongs to the ATPase A chain family. As to quaternary structure, F-type ATPases have 2 components, CF(1) - the catalytic core - and CF(0) - the membrane proton channel. CF(1) has five subunits: alpha(3), beta(3), gamma(1), delta(1), epsilon(1). CF(0) has three main subunits: a(1), b(2) and c(9-12). The alpha and beta chains form an alternating ring which encloses part of the gamma chain. CF(1) is attached to CF(0) by a central stalk formed by the gamma and epsilon chains, while a peripheral stalk is formed by the delta and b chains.

It is found in the cell inner membrane. In terms of biological role, key component of the proton channel; it plays a direct role in the translocation of protons across the membrane. In Protochlamydia amoebophila (strain UWE25), this protein is ATP synthase subunit a.